Reading from the N-terminus, the 187-residue chain is Peptide deformylase (187 aa).

Residues C107 and H149 each coordinate Fe cation. E150 is an active-site residue. Position 153 (H153) interacts with Fe cation.

This sequence belongs to the polypeptide deformylase family. Requires Fe(2+) as cofactor.

The catalysed reaction is N-terminal N-formyl-L-methionyl-[peptide] + H2O = N-terminal L-methionyl-[peptide] + formate. Removes the formyl group from the N-terminal Met of newly synthesized proteins. Requires at least a dipeptide for an efficient rate of reaction. N-terminal L-methionine is a prerequisite for activity but the enzyme has broad specificity at other positions. The polypeptide is Peptide deformylase (Picosynechococcus sp. (strain ATCC 27264 / PCC 7002 / PR-6) (Agmenellum quadruplicatum)).